A 344-amino-acid polypeptide reads, in one-letter code: uncharacterized protein (344 aa).

Residues 221 to 249 (IQAQSMDEQKQIQEIYQNVEKLKEDVTKN) adopt a coiled-coil conformation.

The protein belongs to the IIV-6 287R family.

This is an uncharacterized protein from Aedes vexans (Inland floodwater mosquito).